Reading from the N-terminus, the 320-residue chain is Glutaminase (320 aa).

Residues S70, N121, E165, N172, Y196, Y248, and V266 each coordinate substrate.

The protein belongs to the glutaminase family. Homotetramer.

The catalysed reaction is L-glutamine + H2O = L-glutamate + NH4(+). The chain is Glutaminase from Mycobacterium marinum (strain ATCC BAA-535 / M).